Here is an 86-residue protein sequence, read N- to C-terminus: Toxin To8 (86 aa).

The first 20 residues, 1 to 20 (MTRFVLFISCFFLIGMVVEC), serve as a signal peptide directing secretion. Residues 21–83 (KEGYLLGSRG…LWESDTNECG (63 aa)) enclose the LCN-type CS-alpha/beta domain. 4 cysteine pairs are disulfide-bonded: Cys31-Cys82, Cys35-Cys57, Cys43-Cys63, and Cys47-Cys65. Cys82 is subject to Cysteine amide.

Belongs to the long (4 C-C) scorpion toxin superfamily. Sodium channel inhibitor family. Beta subfamily. In terms of tissue distribution, expressed by the venom gland.

It localises to the secreted. In terms of biological role, beta toxins bind voltage-independently at site-4 of sodium channels (Nav) and shift the voltage of activation toward more negative potentials thereby affecting sodium channel activation and promoting spontaneous and repetitive firing. In Tityus obscurus (Amazonian scorpion), this protein is Toxin To8.